The primary structure comprises 314 residues: MITRLKNWPCLLKRFSIQQIHQFTHLSGRFERAPQSSKSPRDPYLVTVVQGRSKKPRFPGERSNQRFGEDSWFVNSTPLAEVMGVADGVGGWRDLGVDAGRFAKELMSCCSGQTQLSDFDGRSPRNLLIAGFQELSHREQPVVGSSTACLATMHRKDCTLYTANLGDSGFLVVRNGRVLHRSVEQTHDFNTPYQLTVPPEDRKESYYCDKPEMAVSSRHSLLPGDLVLLATDGLFDNMPESMLLSILNGLKERGERDLLEGASRVVEKARELSLNASFQSPFAIKARQHNVSYSGGGKPDDITLILSSVEVPSV.

The region spanning 43–309 (PYLVTVVQGR…DDITLILSSV (267 aa)) is the PPM-type phosphatase domain. Residues Asp-87, Gly-88, and Asp-232 each contribute to the Mn(2+) site.

Belongs to the PP2C family. It depends on Mg(2+) as a cofactor. Mn(2+) is required as a cofactor.

The catalysed reaction is O-phospho-L-seryl-[protein] + H2O = L-seryl-[protein] + phosphate. The enzyme catalyses O-phospho-L-threonyl-[protein] + H2O = L-threonyl-[protein] + phosphate. This chain is Protein phosphatase PTC7 homolog fig, found in Drosophila sechellia (Fruit fly).